The sequence spans 370 residues: Putative agmatine deiminase (370 aa).

Cysteine 361 (amidino-cysteine intermediate) is an active-site residue.

The protein belongs to the agmatine deiminase family.

The enzyme catalyses agmatine + H2O = N-carbamoylputrescine + NH4(+). The polypeptide is Putative agmatine deiminase (Shewanella baltica (strain OS223)).